Consider the following 443-residue polypeptide: Trimethylamine monooxygenase (443 aa).

Residues D37, Q39, L45, and W46 each contribute to the FAD site. NADP(+)-binding residues include W70 and N72. The FAD site is built by N72 and V125. Y170, S202, S203, S205, and R226 together coordinate NADP(+). FAD-binding residues include Q315 and T318. R409 contributes to the NADP(+) binding site.

This sequence belongs to the FMO family. It depends on FAD as a cofactor.

It catalyses the reaction trimethylamine + NADPH + O2 = trimethylamine N-oxide + NADP(+) + H2O. Functionally, catalyzes the oxidation of trimethylamine (TMA) to produce trimethylamine N-oxide (TMAO). In vitro, has a broad substrate specificity, oxidizing many nitrogen- and sulfur-containing compounds, including dimethylamine (DMA), dimethylsulfide (DMS) and dimethylsulfoxide (DMSO). In Pelagibacter ubique (strain HTCC1002), this protein is Trimethylamine monooxygenase.